The primary structure comprises 363 residues: uncharacterized protein (363 aa).

It belongs to the TelA family.

This is an uncharacterized protein from Bacillus subtilis (strain 168).